Reading from the N-terminus, the 45-residue chain is GHVPCGKDRRKCGYHADCCNCCLSGICKPSTSWTGCSTSTFLLTR.

4 disulfide bridges follow: cysteine 5/cysteine 19, cysteine 12/cysteine 22, cysteine 18/cysteine 27, and cysteine 21/cysteine 36. A D-leucine modification is found at leucine 43. Arginine 45 is a propeptide (removed by a carboxypeptidase).

This sequence belongs to the conotoxin I1 superfamily. In terms of tissue distribution, expressed by the venom duct.

The protein localises to the secreted. Iota-conotoxins bind to voltage-gated sodium channels (Nav) and act as agonists by shifting the voltage-dependence of activation to more hyperpolarized levels. Produces general excitatory symptoms. This Conus radiatus (Rayed cone) protein is Iota-conotoxin-like R11.12.